The chain runs to 336 residues: Filaggrin (336 aa).

The disordered stretch occupies residues 1-313 (PDGSGRSSNR…GVQGAAASGQ (313 aa)). Low complexity-rich tracts occupy residues 16–26 (QLSPSQSSDSQ), 40–66 (SSSANRRAGSSSGSGVQGASAGGLAAD), and 73–98 (ARQGQASAQGRAGSQGQAQGRVSSSA). Composition is skewed to basic and acidic residues over residues 100–120 (RQGRRGVSESRASDSEGHSDF), 163–176 (DSQHQHGHQHEQQR), and 184–195 (HQHEHEQPESGH). Residues 285–311 (AQRGQSSSANRRAGSSSGSGVQGAAAS) are compositionally biased toward low complexity.

This sequence belongs to the S100-fused protein family. Post-translationally, filaggrin is initially synthesized as a large, insoluble, highly phosphorylated precursor containing many tandem copies of 248 AA, which are not separated by large linker sequences. During terminal differentiation it is dephosphorylated and proteolytically cleaved. In terms of tissue distribution, expressed in the granular layer of the epidermis (at protein level). Expressed in the epidermis of the ear (at protein level).

It localises to the cytoplasmic granule. Its function is as follows. Aggregates keratin intermediate filaments and promotes disulfide-bond formation among the intermediate filaments during terminal differentiation of mammalian epidermis. The chain is Filaggrin (Flg) from Mus musculus (Mouse).